Here is a 313-residue protein sequence, read N- to C-terminus: N(5)-(carboxyethyl)ornithine synthase (313 aa).

The pyruvate site is built by Arg15, Lys71, and His92. 171–176 lines the NADP(+) pocket; that stretch reads GSGNVA.

The protein belongs to the AlaDH/PNT family. CEOS subfamily. In terms of assembly, homotetramer.

It catalyses the reaction N(5)-[1(S)-1-carboxyethyl]-L-ornithine + NADP(+) + H2O = L-ornithine + pyruvate + NADPH + H(+). Its activity is regulated as follows. Is potently inhibited by the reaction product N(5)-(L-1-carboxyethyl)-L-ornithine. Catalyzes the NADPH-dependent reductive condensation between pyruvic acid and the side chain amino group of L-ornithine to form N(5)-(L-1-carboxyethyl)-L-ornithine. To a lesser extent, can also use L-lysine as substrate (yielding N(6)-(L-1-carboxyethyl)-L-lysine). NADH cannot replace NADPH in the condensation reaction. The chain is N(5)-(carboxyethyl)ornithine synthase (ceo) from Lactococcus lactis subsp. lactis (Streptococcus lactis).